The following is a 354-amino-acid chain: MITLDYRNKENVEVDSSLHNESRSASAFRSKKEARRYWIVLITLIALGLLSSYGLLVYNNPVPIDSPSFIPVVKRRIVAIVAMIIAAVCHSLSTVAFQSITNNKIITPSLLGFESLYSAIQTSTVFFFGASALINFNGIGSFLFQVVVMVFMSLILYGWLLSGKYGNLQLMLLVGIIIGTGLNSVSTFMRKLLAPSEFDILQARLFGSVNHADPAYFPIVIPMIIIVAVLIFAHSKNLNVLSLGKDVATSFGVKYQPSVIYTLVLVAILMSISTALIGPLTFYGFLVATLSYQAAATYDHRYIFPMAFAIGFLIMTSAYFLMYHVFHAQGVVSVIIELFGGIIFLTIVLRKRAL.

9 consecutive transmembrane segments (helical) span residues 37–57 (YWIV…GLLV), 77–97 (IVAI…TVAF), 116–136 (LYSA…LINF), 141–161 (SFLF…GWLL), 168–188 (LQLM…VSTF), 214–234 (PAYF…IFAH), 259–279 (VIYT…LIGP), 302–322 (YIFP…YFLM), and 329–349 (QGVV…TIVL).

It belongs to the binding-protein-dependent transport system permease family. FecCD subfamily. The complex is composed of two ATP-binding proteins (FatE), two transmembrane proteins (FatC and FatD) and a solute-binding protein (FpuA).

Its subcellular location is the cell membrane. Part of an ABC transporter complex involved in ferric-petrobactin uptake. Probably responsible for the translocation of the substrate across the membrane. The chain is Petrobactin import system permease protein FatC from Bacillus anthracis.